The primary structure comprises 136 residues: Protein PsiE (136 aa).

Helical transmembrane passes span 15–35, 55–75, 82–102, and 108–128; these read ILQT…VVFL, YELV…ALIV, FHFP…RLII, and PLDV…LWLC.

The protein belongs to the PsiE family.

The protein localises to the cell inner membrane. The protein is Protein PsiE of Escherichia coli O17:K52:H18 (strain UMN026 / ExPEC).